The primary structure comprises 150 residues: D-aminoacyl-tRNA deacylase (150 aa).

The short motif at 138-139 (GP) is the Gly-cisPro motif, important for rejection of L-amino acids element.

The protein belongs to the DTD family. Homodimer.

It is found in the cytoplasm. It catalyses the reaction glycyl-tRNA(Ala) + H2O = tRNA(Ala) + glycine + H(+). It carries out the reaction a D-aminoacyl-tRNA + H2O = a tRNA + a D-alpha-amino acid + H(+). In terms of biological role, an aminoacyl-tRNA editing enzyme that deacylates mischarged D-aminoacyl-tRNAs. Also deacylates mischarged glycyl-tRNA(Ala), protecting cells against glycine mischarging by AlaRS. Acts via tRNA-based rather than protein-based catalysis; rejects L-amino acids rather than detecting D-amino acids in the active site. By recycling D-aminoacyl-tRNA to D-amino acids and free tRNA molecules, this enzyme counteracts the toxicity associated with the formation of D-aminoacyl-tRNA entities in vivo and helps enforce protein L-homochirality. The protein is D-aminoacyl-tRNA deacylase of Flavobacterium johnsoniae (strain ATCC 17061 / DSM 2064 / JCM 8514 / BCRC 14874 / CCUG 350202 / NBRC 14942 / NCIMB 11054 / UW101) (Cytophaga johnsonae).